Consider the following 123-residue polypeptide: UPF0102 protein PputGB1_4524 (123 aa).

It belongs to the UPF0102 family.

The polypeptide is UPF0102 protein PputGB1_4524 (Pseudomonas putida (strain GB-1)).